Consider the following 938-residue polypeptide: Protein SEY1 (938 aa).

The tract at residues 1-159 (MTSQSHGAPP…QKSAKSTPGS (159 aa)) is disordered. The Cytoplasmic portion of the chain corresponds to 1 to 839 (MTSQSHGAPP…KRSTIQSTTQ (839 aa)). A compositionally biased stretch (low complexity) spans 33–45 (SVSSSHSSHSPVT). Residues 74-94 (IAAPEPIAAPEPIPAPEPIAA) are compositionally biased toward pro residues. Residues 100–118 (LKSEHKPVEREHKPVERKP) show a composition bias toward basic and acidic residues. Residues 146 to 158 (VPTSQKSAKSTPG) are compositionally biased toward polar residues. A GB1/RHD3-type G domain is found at 192-423 (GLDYHVVAVF…DPNYVFKPVY (232 aa)). 202-209 (GSQSTGKS) serves as a coordination point for GTP. Residues 603–630 (SYDDTLAALEQELDTLRDHKSKVEIDRL) are a coiled coil. Residues 840-860 (IPLYMYGLLLLLGWNEIMAVL) form a helical membrane-spanning segment. At 861–863 (RSP) the chain is on the lumenal side. Residues 864–884 (VYFMFLLVAAGAAYVIHTLHL) traverse the membrane as a helical segment. The Cytoplasmic segment spans residues 885–938 (WGPLTHMTNTMIAEATDMAKAKLKQVLNEAPTGETREREAPVGSSRDDVELKDL). A disordered region spans residues 911–938 (LNEAPTGETREREAPVGSSRDDVELKDL). A compositionally biased stretch (basic and acidic residues) spans 918-938 (ETREREAPVGSSRDDVELKDL).

It belongs to the TRAFAC class dynamin-like GTPase superfamily. GB1/RHD3 GTPase family. RHD3 subfamily.

The protein localises to the endoplasmic reticulum membrane. In terms of biological role, cooperates with the reticulon proteins and tubule-shaping DP1 family proteins to generate and maintain the structure of the tubular endoplasmic reticulum network. Has GTPase activity, which is required for its function in ER organization. The polypeptide is Protein SEY1 (Yarrowia lipolytica (strain CLIB 122 / E 150) (Yeast)).